Consider the following 184-residue polypeptide: UPF0149 protein PA14_69010 (184 aa).

It belongs to the UPF0149 family.

This chain is UPF0149 protein PA14_69010, found in Pseudomonas aeruginosa (strain UCBPP-PA14).